The following is a 249-amino-acid chain: 2,3-bisphosphoglycerate-dependent phosphoglycerate mutase (249 aa).

Residues 8 to 15, 21 to 22, R60, 87 to 90, K98, 114 to 115, and 183 to 184 contribute to the substrate site; these read RHGESVWN, TG, ERHY, RR, and GN. The active-site Tele-phosphohistidine intermediate is H9. The Proton donor/acceptor role is filled by E87.

The protein belongs to the phosphoglycerate mutase family. BPG-dependent PGAM subfamily.

The catalysed reaction is (2R)-2-phosphoglycerate = (2R)-3-phosphoglycerate. Its pathway is carbohydrate degradation; glycolysis; pyruvate from D-glyceraldehyde 3-phosphate: step 3/5. Catalyzes the interconversion of 2-phosphoglycerate and 3-phosphoglycerate. This Endomicrobium trichonymphae protein is 2,3-bisphosphoglycerate-dependent phosphoglycerate mutase.